The sequence spans 664 residues: Cyclic nucleotide-gated channel alpha-2 (664 aa).

The span at 1-10 (MMTEKSNGVK) shows a compositional bias: polar residues. The disordered stretch occupies residues 1–61 (MMTEKSNGVK…LQRLAEMDTP (61 aa)). At 1 to 146 (MMTEKSNGVK…PAGDWYYRWL (146 aa)) the chain is on the cytoplasmic side. The chain crosses the membrane as a helical span at residues 147–168 (FVIAMPVLYNWCLLVARACFSD). At 169-178 (LQRNYFVVWL) the chain is on the extracellular side. The helical transmembrane segment at 179 to 199 (VLDYFSDTVYIADLIIRLRTG) threads the bilayer. Over 200 to 224 (FLEQGLLVKDPKKLRDNYIHTLQFK) the chain is Cytoplasmic. A helical transmembrane segment spans residues 225–243 (LDVASIIPTDLIYFAVGIH). The Extracellular portion of the chain corresponds to 244–248 (SPEVR). Residues 249–267 (FNRLLHFARMFEFFDRTET) form a helical membrane-spanning segment. Residues 268 to 274 (RTSYPNI) lie on the Cytoplasmic side of the membrane. The segment at 272-380 (PNIFRISNLV…GNVGSMISNM (109 aa)) is ion conduction pathway. A helical transmembrane segment spans residues 275-298 (FRISNLVLYILVIIHWNACIYYAI). Residues 299–321 (SKSIGFGVDTWVYPNITDPEYGY) lie on the Extracellular side of the membrane. 2 helical membrane passes run 322–356 (LAREYIYCLYWSTLTLTTIGETPPPVKDEEYLFVI) and 357–381 (FDFLIGVLIFATIVGNVGSMISNMN). The interval 339-342 (TIGE) is selectivity filter. The C-linker stretch occupies residues 382 to 458 (ATRAEFQAKI…STLKKVRIFQ (77 aa)). Residues 382–664 (ATRAEFQAKI…INTPEPAVAE (283 aa)) lie on the Cytoplasmic side of the membrane. The cyclic nucleotide-binding domain stretch occupies residues 462–582 (AGLLVELVLK…EERGREILMK (121 aa)). Residues glycine 522, serine 525, arginine 538, and threonine 539 each coordinate 3',5'-cyclic GMP. Arginine 538 and threonine 539 together coordinate 3',5'-cyclic AMP. The stretch at 599–653 (VQEKLEQLETNMETLYTRFARLLAEYTGAQQKLKQRITVLETKMKQNHEDDYLSD) forms a coiled coil.

This sequence belongs to the cyclic nucleotide-gated cation channel (TC 1.A.1.5) family. CNGA2 subfamily. The olfactory cyclic nucleotide-gated channel is an heterotetramer composed of CNGA2, CNGA4 and CNGB1b subunits with 2:1:1 stoichiometry.

The protein resides in the cell projection. It localises to the cilium membrane. The catalysed reaction is Ca(2+)(in) = Ca(2+)(out). The enzyme catalyses Na(+)(in) = Na(+)(out). It catalyses the reaction K(+)(in) = K(+)(out). It carries out the reaction NH4(+)(in) = NH4(+)(out). The catalysed reaction is Rb(+)(in) = Rb(+)(out). The enzyme catalyses Li(+)(in) = Li(+)(out). It catalyses the reaction Cs(+)(in) = Cs(+)(out). In terms of biological role, pore-forming subunit of the olfactory cyclic nucleotide-gated channel. Operates in the cilia of olfactory sensory neurons where chemical stimulation of the odorant is converted to an electrical signal. Mediates odorant-induced cAMP-dependent Ca(2+) influx triggering neuron depolarization. The rise of intracellular Ca(2+) levels potentiates the olfactory response by activating Ca(2+)-dependent Cl(-) channels, but it also serves as a negative feedback signal to desensitize the channel for rapid adaptation to odorants. Conducts cAMP- and cGMP-gated ion currents, with permeability for monovalent and divalent cations. The sequence is that of Cyclic nucleotide-gated channel alpha-2 from Mus musculus (Mouse).